Consider the following 1871-residue polypeptide: Callose synthase 4 (1871 aa).

Residues 1 to 491 are Cytoplasmic-facing; it reads MNQPNRGQIL…FWHLFRSFDR (491 aa). The helical transmembrane segment at 492-512 threads the bilayer; that stretch reads MWSFYILSLQAMIIIAWNETS. Topologically, residues 513–521 are extracellular; that stretch reads ESGGAVFHK. The helical transmembrane segment at 522–542 threads the bilayer; the sequence is VLSVFITAAKLNLFQAFLDIA. Residues 543 to 558 lie on the Cytoplasmic side of the membrane; sequence LSWKARHSMSTHVRQR. Residues 559 to 579 traverse the membrane as a helical segment; sequence YIFKAVAAAVWVLLMPLTYAY. Residues 580–583 lie on the Extracellular side of the membrane; sequence SHTS. Residues 584 to 604 traverse the membrane as a helical segment; it reads IFIVAILIYLSPNMLPEMLLL. Residues 605–640 lie on the Cytoplasmic side of the membrane; it reads IPSIRRTLEKSDFRPVKLIMWWSQPELYIGRGMHES. A helical membrane pass occupies residues 641 to 661; that stretch reads AWSIYKYMMFWIVLLTSKLAF. Residues 662-701 are Extracellular-facing; it reads SYYVEQIKPLMGPTKEIMSVPMPGYWLPEFFPHVKNNRGV. The helical transmembrane segment at 702-724 threads the bilayer; sequence VITLWSPVILVYFMDTQIWYAIV. Topologically, residues 725 to 1441 are cytoplasmic; it reads STLVGGLYGA…FDFFRMLSCY (717 aa). The chain crosses the membrane as a helical span at residues 1442-1462; it reads FTTVGFYFCSMLTVLTVYVFL. Topologically, residues 1463–1485 are extracellular; the sequence is YGRLYLVLSGVEKELGNKPMMME. Residues 1486–1506 traverse the membrane as a helical segment; sequence IILASQSFVQIVFLMAMPMIM. At 1507-1516 the chain is on the cytoplasmic side; that stretch reads EIGLERGFYD. The chain crosses the membrane as a helical span at residues 1517-1537; that stretch reads ALFDFVLMQLQLASVFFTFQL. Residues 1538–1580 lie on the Extracellular side of the membrane; it reads GTKFHYYCKTLLHGGAEYRGTGRGFVVFHAKFAENYRFYSRSH. The next 2 helical transmembrane spans lie at 1581–1601 and 1602–1622; these read FVKA…GPTY and IGLF…APFL. Residues 1623–1675 lie on the Extracellular side of the membrane; that stretch reads FNPSGFEWHEIVEDWADWKKWIEYDNGGIGVPPEKSWESWWEKDIEHLQHSGK. The chain crosses the membrane as a helical span at residues 1676–1696; the sequence is WGIVVEIFFALRFFIFQYGLV. Residues 1697 to 1708 lie on the Cytoplasmic side of the membrane; sequence YQLSAFKNKYSS. Residues 1709 to 1729 traverse the membrane as a helical segment; the sequence is LWVFGASWLLILILLLTVTVL. The Extracellular portion of the chain corresponds to 1730–1741; that stretch reads DYARRRLGTEFQ. The chain crosses the membrane as a helical span at residues 1742–1762; the sequence is LLFRIIKVSLFLAFMAIFITL. Residues 1763–1772 are Cytoplasmic-facing; sequence MTCRLILPQD. The helical transmembrane segment at 1773-1793 threads the bilayer; that stretch reads VFLCMLALIPTGWGLLLIAQS. Residues 1794–1815 lie on the Extracellular side of the membrane; the sequence is CKPLIQQPGIWSWVMTLAWVYD. Residues 1816-1836 traverse the membrane as a helical segment; that stretch reads LVMGSLLFIPIAFMAWFPFIS. The Cytoplasmic portion of the chain corresponds to 1837-1871; sequence EFQTRMLFNQAFSRGLHISRILSGQRKHRSSKNKD.

It belongs to the glycosyltransferase 48 family.

Its subcellular location is the cell membrane. It carries out the reaction [(1-&gt;3)-beta-D-glucosyl](n) + UDP-alpha-D-glucose = [(1-&gt;3)-beta-D-glucosyl](n+1) + UDP + H(+). In terms of biological role, involved in callose synthesis at the forming cell plate during cytokinesis. During plant growth and development, callose is found as a transitory component of the cell plate in dividing cells, is a major component of pollen mother cell walls and pollen tubes, and is found as a structural component of plasmodesmatal canals. In Arabidopsis thaliana (Mouse-ear cress), this protein is Callose synthase 4 (CALS4).